Here is a 249-residue protein sequence, read N- to C-terminus: MATLRVLPEAQAKVDVFREDLCTKTENLLGSYFPKKISELDAFLKEPDLNEANLSNLKAPLDIPVPDPVKEKEKEERRKQQEKEDKDEKKKGEDEDKGPPCGPVGCNEKIVVLLQRVKPEIKDVIEKLNLVTTWLQLQIPRIEDGNNFGVAVQEKVFELMTALHTKLEGFHTQISKYFSERGDAVTKAAKQPHVGDYRQLVHELDEAEYRDIRLMVMEIRNAYAVLYDIILKNFEKLKKPRGETKGMIY.

Residues 55-102 form a disordered region; it reads SNLKAPLDIPVPDPVKEKEKEERRKQQEKEDKDEKKKGEDEDKGPPCG. Positions 68-98 are enriched in basic and acidic residues; the sequence is PVKEKEKEERRKQQEKEDKDEKKKGEDEDKG.

It belongs to the PA28 family. Heterodimer of PSME1 and PSME2, which forms a hexameric ring. PSME1 can form homoheptamers.

Implicated in immunoproteasome assembly and required for efficient antigen processing. The PA28 activator complex enhances the generation of class I binding peptides by altering the cleavage pattern of the proteasome. This Bos taurus (Bovine) protein is Proteasome activator complex subunit 1 (PSME1).